A 404-amino-acid chain; its full sequence is cAMP-dependent protein kinase regulatory subunit (404 aa).

Positions 14 to 144 are dimerization and phosphorylation; the sequence is LTDHELLRIP…RLKTAIAGNF (131 aa). Serine 105 is modified (phosphoserine). Residues 145 to 276, glutamate 223, arginine 232, 277 to 398, glutamate 344, and arginine 353 each bind 3',5'-cyclic AMP; these read LFSH…EKFP and CCRH…GVEE.

Belongs to the cAMP-dependent kinase regulatory chain family. As to quaternary structure, tetramer, composed of 2 regulatory (R) and 2 catalytic (C) subunits. In the presence of cAMP it dissociates into 2 active monomeric C subunits and an R dimer.

Its function is as follows. cAMP-dependent protein kinase PKA regulatory subunit. The protein is cAMP-dependent protein kinase regulatory subunit (PKAR) of Colletotrichum trifolii.